Consider the following 1904-residue polypeptide: Callose synthase 10 (1904 aa).

The stretch at 100 to 132 (VIKQKLAKRDGASIDRDRDIERLWEFYKLYKRR) is one HAT 1 repeat. The next 6 helical transmembrane spans lie at 491–511 (SFIR…IIAF), 532–552 (AIMN…AYSM), 562–582 (VIRF…YVKV), 594–614 (FFFH…LIFG), 661–681 (YVAF…FLQI), and 722–742 (VLAI…AIIG). Residues 678–701 (FLQIKPLVKPTNTIIHLPPFQYSW) form an LRR 1 repeat. LRR repeat units lie at residues 751–774 (LGEI…FAQN) and 925–948 (TLNL…LIRN). One copy of the HAT 2 repeat lies at 1074–1107 (YSSSELRSENEDGISILFYLQKIFPDEWENFLER). The LRR 4 repeat unit spans residues 1159-1181 (FLERRGLGVDDASLTNMPRGFES). A run of 9 helical transmembrane segments spans residues 1474–1494 (FTTV…YVFL), 1529–1549 (FLVQ…ILEL), 1554–1574 (AIFS…TFSL), 1621–1641 (AFEV…DGGA), 1644–1664 (FVLL…APYI), 1747–1767 (LALY…FKLF), 1783–1803 (FLQG…IAMT), 1811–1831 (FACV…AITW), and 1853–1873 (AAMG…PFIS). Residues 1659-1691 (LFAPYIFNPSGFEWQKTVEDFEDWVSWLMYKGG) form an HAT 3 repeat.

It belongs to the glycosyltransferase 48 family.

It localises to the cell membrane. The catalysed reaction is [(1-&gt;3)-beta-D-glucosyl](n) + UDP-alpha-D-glucose = [(1-&gt;3)-beta-D-glucosyl](n+1) + UDP + H(+). Involved in sporophytic and gametophytic development. Required for normal plant development and for the proper accumulation of callose at cell plates, cll walls and plasmodesmata. During pollen formation, required for the entry of microspores into mitosis. During plant growth and development, callose is found as a transitory component of the cell plate in dividing cells, is a major component of pollen mother cell walls and pollen tubes, and is found as a structural component of plasmodesmatal canals. Required for proper cell division and tissue patterning throughout plant organs, including stomatal patterning. The protein is Callose synthase 10 (CALS10) of Arabidopsis thaliana (Mouse-ear cress).